The sequence spans 113 residues: Holo-[acyl-carrier-protein] synthase (113 aa).

Residues Asp-8 and Glu-57 each coordinate Mg(2+).

Belongs to the P-Pant transferase superfamily. AcpS family. The cofactor is Mg(2+).

It localises to the cytoplasm. It carries out the reaction apo-[ACP] + CoA = holo-[ACP] + adenosine 3',5'-bisphosphate + H(+). In terms of biological role, transfers the 4'-phosphopantetheine moiety from coenzyme A to a Ser of acyl-carrier-protein. The sequence is that of Holo-[acyl-carrier-protein] synthase from Thermodesulfovibrio yellowstonii (strain ATCC 51303 / DSM 11347 / YP87).